The primary structure comprises 585 residues: Glutamate decarboxylase (585 aa).

Residues 35–56 (KSAVQSGHQGSNNMRDTSSQGM) are compositionally biased toward polar residues. Residues 35–60 (KSAVQSGHQGSNNMRDTSSQGMANKY) form a disordered region. K318 bears the N6-(pyridoxal phosphate)lysine mark.

It belongs to the group II decarboxylase family. Pyridoxal 5'-phosphate serves as cofactor.

The catalysed reaction is L-glutamate + H(+) = 4-aminobutanoate + CO2. The protein is Glutamate decarboxylase (GAD1) of Saccharomyces cerevisiae (strain ATCC 204508 / S288c) (Baker's yeast).